Reading from the N-terminus, the 206-residue chain is Large ribosomal subunit protein uL3 (206 aa).

Residues 122-154 are disordered; that stretch reads VVKRHGHAGGPGGHGSRFHRHPGSMGANSTPSR.

It belongs to the universal ribosomal protein uL3 family. Part of the 50S ribosomal subunit. Forms a cluster with proteins L14 and L19.

Functionally, one of the primary rRNA binding proteins, it binds directly near the 3'-end of the 23S rRNA, where it nucleates assembly of the 50S subunit. This chain is Large ribosomal subunit protein uL3, found in Leptospira borgpetersenii serovar Hardjo-bovis (strain JB197).